The following is a 765-amino-acid chain: Zinc metalloproteinase nas-37 (765 aa).

The signal sequence occupies residues 1–22 (MKSQACLKVCLALIGLVSIVST). Residues 23–114 (AYIANDVVSD…SESNSPRSRR (92 aa)) constitute a propeptide that is removed on maturation. One can recognise a Peptidase M12A domain in the interval 115–308 (QAHPDPRNFW…AKMINTRYCS (194 aa)). The N-linked (GlcNAc...) asparagine glycan is linked to Asn126. Disulfide bonds link Cys156–Cys307, Cys177–Cys196, Cys311–Cys331, Cys333–Cys342, Cys350–Cys374, and Cys400–Cys420. Residue His204 participates in Zn(2+) binding. Glu205 is an active-site residue. Residues His208 and His214 each contribute to the Zn(2+) site. In terms of domain architecture, EGF-like spans 303-343 (NTRYCSNVCQRSLPCLNEGYTDPNNCGRCRCPSGYGGTYCE). A CUB domain is found at 350–458 (CGGSLTASSS…RGFTLKYRAI (109 aa)). The segment at 513–573 (KYSSEELYDP…TRPTPTTTVA (61 aa)) is disordered. 2 stretches are compositionally biased toward low complexity: residues 526-545 (LSPSSSSASPALLLPSDASP) and 562-573 (ALTRPTPTTTVA). Residues 576–627 (TASWSAWGEWSACSQPCGGCGTKTRVRACYGGNQVCPGSNLDRESCNAHACA) form the TSP type-1 domain. Cystine bridges form between Cys588–Cys621, Cys592–Cys626, and Cys604–Cys611.

The cofactor is Zn(2+). As to expression, expressed in hypodermal cells. Not expressed in the seam cells in L1 to L3 larvae, but it is present in seam cells of L4 larvae. Also expressed in attachment points of the cuticle at the anterior end of larvae, in the arcade cells in the mouth, the anterior pharynx, the amphid socket cells, and in the rectal epithelial cells at the posterior end of the larvae (at protein level).

It is found in the secreted. In terms of biological role, metalloprotease. Plays an essential role in molting, a process during larval stages in which a new cuticle is formed and the old cuticle is shed. Required during ecdysis, the opening of the cuticle to allow the worm to escape. This is Zinc metalloproteinase nas-37 (nas-37) from Caenorhabditis elegans.